A 336-amino-acid chain; its full sequence is Ketol-acid reductoisomerase (NADP(+)) 1 (336 aa).

One can recognise a KARI N-terminal Rossmann domain in the interval 2 to 181; the sequence is AKVYYEKDVT…GATRAGVLET (180 aa). NADP(+) contacts are provided by residues 25 to 28, Arg48, Ser52, and 82 to 85; these read YGSQ and DELQ. His107 is a catalytic residue. Gly133 is a binding site for NADP(+). The 146-residue stretch at 182 to 327 folds into the KARI C-terminal knotted domain; it reads TFKEETETDL…RKLREMMPFV (146 aa). Mg(2+) contacts are provided by Asp190, Glu194, Glu226, and Glu230. Ser251 provides a ligand contact to substrate.

Belongs to the ketol-acid reductoisomerase family. The cofactor is Mg(2+).

The enzyme catalyses (2R)-2,3-dihydroxy-3-methylbutanoate + NADP(+) = (2S)-2-acetolactate + NADPH + H(+). The catalysed reaction is (2R,3R)-2,3-dihydroxy-3-methylpentanoate + NADP(+) = (S)-2-ethyl-2-hydroxy-3-oxobutanoate + NADPH + H(+). It participates in amino-acid biosynthesis; L-isoleucine biosynthesis; L-isoleucine from 2-oxobutanoate: step 2/4. Its pathway is amino-acid biosynthesis; L-valine biosynthesis; L-valine from pyruvate: step 2/4. Involved in the biosynthesis of branched-chain amino acids (BCAA). Catalyzes an alkyl-migration followed by a ketol-acid reduction of (S)-2-acetolactate (S2AL) to yield (R)-2,3-dihydroxy-isovalerate. In the isomerase reaction, S2AL is rearranged via a Mg-dependent methyl migration to produce 3-hydroxy-3-methyl-2-ketobutyrate (HMKB). In the reductase reaction, this 2-ketoacid undergoes a metal-dependent reduction by NADPH to yield (R)-2,3-dihydroxy-isovalerate. The protein is Ketol-acid reductoisomerase (NADP(+)) 1 of Bacillus cereus (strain ATCC 14579 / DSM 31 / CCUG 7414 / JCM 2152 / NBRC 15305 / NCIMB 9373 / NCTC 2599 / NRRL B-3711).